The primary structure comprises 169 residues: MAALLLRHVGRHCLRAHLSPQLCIRNAVPLGTTAKEEMERFWNKNLGSNRPLSPHITIYRWSLPMAMSICHRGTGIALSAGVSLFGLSALLLPGNFESHLELVKSLCLGPTLIYTAKFGIVFPLMYHTWNGIRHLIWDLGKGLTIPQLTQSGVVVLILTVLSSVGLAAM.

A mitochondrion-targeting transit peptide spans 1-29 (MAALLLRHVGRHCLRAHLSPQLCIRNAVP). At 30–62 (LGTTAKEEMERFWNKNLGSNRPLSPHITIYRWS) the chain is on the mitochondrial matrix side. Residues 63-92 (LPMAMSICHRGTGIALSAGVSLFGLSALLL) traverse the membrane as a helical segment. Residues 93-112 (PGNFESHLELVKSLCLGPTL) are Mitochondrial intermembrane-facing. The chain crosses the membrane as a helical span at residues 113 to 137 (IYTAKFGIVFPLMYHTWNGIRHLIW). His-127 is a heme b binding site. Over 138 to 144 (DLGKGLT) the chain is Mitochondrial matrix. The chain crosses the membrane as a helical span at residues 145–166 (IPQLTQSGVVVLILTVLSSVGL). Topologically, residues 167 to 169 (AAM) are mitochondrial intermembrane.

Belongs to the cytochrome b560 family. In terms of assembly, component of complex II composed of four subunits: the flavoprotein (FP) SDHA, iron-sulfur protein (IP) SDHB, and a cytochrome b560 composed of SDHC and SDHD. It depends on heme b as a cofactor. In terms of tissue distribution, detected in heart muscle (at protein level).

It is found in the mitochondrion inner membrane. Its pathway is carbohydrate metabolism; tricarboxylic acid cycle. In terms of biological role, membrane-anchoring subunit of succinate dehydrogenase (SDH) that is involved in complex II of the mitochondrial electron transport chain and is responsible for transferring electrons from succinate to ubiquinone (coenzyme Q). SDH also oxidizes malate to the non-canonical enol form of oxaloacetate, enol-oxaloacetate. Enol-oxaloacetate, which is a potent inhibitor of the succinate dehydrogenase activity, is further isomerized into keto-oxaloacetate. This chain is Succinate dehydrogenase cytochrome b560 subunit, mitochondrial (SDHC), found in Sus scrofa (Pig).